The sequence spans 449 residues: tRNA modification GTPase MnmE (449 aa).

Residues R24, E85, and R124 each coordinate (6S)-5-formyl-5,6,7,8-tetrahydrofolate. In terms of domain architecture, TrmE-type G spans 220 to 369 (GIRTAIAGPP…LEEAIIQAFS (150 aa)). Position 230 (N230) interacts with K(+). Residues 230-235 (NVGKSS), 249-255 (SNIAGTT), and 274-277 (DTAG) each bind GTP. Residue S234 coordinates Mg(2+). K(+) contacts are provided by S249, I251, and T254. Position 255 (T255) interacts with Mg(2+). (6S)-5-formyl-5,6,7,8-tetrahydrofolate is bound at residue K449.

The protein belongs to the TRAFAC class TrmE-Era-EngA-EngB-Septin-like GTPase superfamily. TrmE GTPase family. Homodimer. Heterotetramer of two MnmE and two MnmG subunits. The cofactor is K(+).

It is found in the cytoplasm. Exhibits a very high intrinsic GTPase hydrolysis rate. Involved in the addition of a carboxymethylaminomethyl (cmnm) group at the wobble position (U34) of certain tRNAs, forming tRNA-cmnm(5)s(2)U34. This is tRNA modification GTPase MnmE from Akkermansia muciniphila (strain ATCC BAA-835 / DSM 22959 / JCM 33894 / BCRC 81048 / CCUG 64013 / CIP 107961 / Muc).